The following is a 1337-amino-acid chain: Activated Cdc42 kinase-like (1337 aa).

Phosphoserine is present on Ser-71. One can recognise a Protein kinase domain in the interval 133 to 399; it reads ISVNKQLGTG…GEIYDQLPDM (267 aa). ATP contacts are provided by residues 139–147 and Lys-164; that span reads LGTGEFGIV. Asp-260 serves as the catalytic Proton acceptor. Residues Tyr-291 and Tyr-292 each carry the phosphotyrosine modification. Residues 399–460 enclose the SH3 domain; it reads MKPEQLKAVV…NPSNTVAFLE (62 aa). The region spanning 488–502 is the CRIB domain; the sequence is ISKPQNDFKHTGHVG. A disordered region spans residues 714-739; that stretch reads SGDTNGNKHGHGLLPTLSKKKSSGTV. A phosphoserine mark is found at Ser-764 and Ser-778. Residues 786–822 form a disordered region; that stretch reads RFPHLSNNGSGDKSGGLGTSGSAHTPTHGNASPFPKK. A compositionally biased stretch (polar residues) spans 805-815; sequence SGSAHTPTHGN. Phosphoserine is present on residues Ser-831, Ser-918, and Ser-924. 2 disordered regions span residues 906 to 969 and 1024 to 1045; these read AGLS…TSTK and PSGMRRPSRPSEREYENMPTVG. Residues 947 to 957 show a composition bias toward pro residues; it reads PESPNPIPLPP.

This sequence belongs to the protein kinase superfamily. Tyr protein kinase family.

The enzyme catalyses L-tyrosyl-[protein] + ATP = O-phospho-L-tyrosyl-[protein] + ADP + H(+). Likely to act as a downstream effector of Cdc42 during dorsal closure, acting in a kinase independent manner with the other ACK family member Ack to positively regulate expression of the myosin zip by promoting the endocytosis of Egfr in the amnioserosa (AS). This chain is Activated Cdc42 kinase-like, found in Drosophila melanogaster (Fruit fly).